Here is a 676-residue protein sequence, read N- to C-terminus: DNA ligase (676 aa).

Residues 41-45 (DLTYD), 90-91 (SL), and Glu-123 contribute to the NAD(+) site. Lys-125 serves as the catalytic N6-AMP-lysine intermediate. NAD(+) contacts are provided by Arg-146, Glu-180, Lys-293, and Lys-317. Zn(2+)-binding residues include Cys-408, Cys-411, Cys-424, and Cys-429.

This sequence belongs to the NAD-dependent DNA ligase family. LigA subfamily. The cofactor is Mg(2+). It depends on Mn(2+) as a cofactor.

It catalyses the reaction NAD(+) + (deoxyribonucleotide)n-3'-hydroxyl + 5'-phospho-(deoxyribonucleotide)m = (deoxyribonucleotide)n+m + AMP + beta-nicotinamide D-nucleotide.. DNA ligase that catalyzes the formation of phosphodiester linkages between 5'-phosphoryl and 3'-hydroxyl groups in double-stranded DNA using NAD as a coenzyme and as the energy source for the reaction. It is essential for DNA replication and repair of damaged DNA. The chain is DNA ligase from Borrelia turicatae (strain 91E135).